Reading from the N-terminus, the 373-residue chain is 3 beta-hydroxysteroid dehydrogenase/Delta 5--&gt;4-isomerase type 1 (373 aa).

Residues 10–15 (GAGGFV), Tyr155, and Lys159 contribute to the NADP(+) site. Residue Lys159 is the Proton donor of the active site. Residues 288 to 308 (LPLLYWLAFLLETVSFLLRPV) traverse the membrane as a helical segment.

This sequence belongs to the 3-beta-HSD family. As to expression, steroidogenic tissues (includes testes, ovaries and adrenal glands).

Its subcellular location is the endoplasmic reticulum membrane. It is found in the mitochondrion membrane. The enzyme catalyses a 3beta-hydroxy-Delta(5)-steroid + NAD(+) = a 3-oxo-Delta(5)-steroid + NADH + H(+). It catalyses the reaction pregnenolone + NAD(+) = pregn-5-ene-3,20-dione + NADH + H(+). It carries out the reaction 3beta-hydroxyandrost-5-en-17-one + NAD(+) = androst-5-ene-3,17-dione + NADH + H(+). The catalysed reaction is androst-5-en-3beta,17beta-diol + NAD(+) = 17beta-hydroxy-androst-5-en-3-one + NADH + H(+). The enzyme catalyses a 3beta-hydroxysteroid + NADP(+) = a 3-oxosteroid + NADPH + H(+). It catalyses the reaction 5alpha-androstane-3beta,17beta-diol + NADP(+) = 17beta-hydroxy-5alpha-androstan-3-one + NADPH + H(+). It carries out the reaction 3beta-hydroxy-5alpha-androstan-17-one + NADP(+) = 5alpha-androstan-3,17-dione + NADPH + H(+). The catalysed reaction is a 3-oxo-Delta(5)-steroid = a 3-oxo-Delta(4)-steroid. The enzyme catalyses pregn-5-ene-3,20-dione = progesterone. It catalyses the reaction androst-5-ene-3,17-dione = androst-4-ene-3,17-dione. It carries out the reaction 17beta-hydroxy-androst-5-en-3-one = testosterone. The catalysed reaction is 5alpha-androstane-3beta,17beta-diol + NAD(+) = 17beta-hydroxy-5alpha-androstan-3-one + NADH + H(+). Its pathway is steroid hormone biosynthesis. It functions in the pathway steroid metabolism. A bifunctional enzyme responsible for the oxidation and isomerization of 3beta-hydroxy-Delta(5)-steroid precursors to 3-oxo-Delta(4)-steroids, an essential step in steroid hormone biosynthesis. Specifically catalyzes the conversion of pregnenolone to progesterone, 17alpha-hydroxypregnenolone to 17alpha-hydroxyprogesterone, dehydroepiandrosterone (DHEA) to 4-androstenedione, and androstenediol to testosterone. Additionally, catalyzes the interconversion between 3beta-hydroxy and 3-oxo-5alpha-androstane steroids controlling the bioavalability of the active forms. Specifically converts dihydrotestosterone to its inactive form 5alpha-androstanediol, that does not bind androgen receptor/AR. Also converts androstanedione, a precursor of testosterone and estrone, to epiandrosterone. Expected to use NAD(+) as preferred electron donor for the 3-beta-hydroxy-steroid dehydrogenase activity and NADPH for the 3-ketosteroid reductase activity. The protein is 3 beta-hydroxysteroid dehydrogenase/Delta 5--&gt;4-isomerase type 1 of Mus musculus (Mouse).